Here is a 108-residue protein sequence, read N- to C-terminus: VQ motif-containing protein 10 (108 aa).

Positions Phe29–Gly38 match the VQ motif. The tract at residues Ile65–Thr85 is disordered. Over residues His73–Met82 the composition is skewed to gly residues.

In terms of assembly, interacts with WRKY25, WRKY26 and WRKY33.

The protein localises to the nucleus. Its function is as follows. May modulate WRKY transcription factor activities. This is VQ motif-containing protein 10 from Arabidopsis thaliana (Mouse-ear cress).